The following is a 273-amino-acid chain: Pantothenate synthetase (273 aa).

27–34 (MGALHQGH) is a binding site for ATP. Residue His34 is the Proton donor of the active site. Gln58 contacts (R)-pantoate. Gln58 lines the beta-alanine pocket. 144-147 (GKKD) provides a ligand contact to ATP. Gln150 is a (R)-pantoate binding site. ATP contacts are provided by residues Val173 and 181-184 (LSSR).

This sequence belongs to the pantothenate synthetase family. As to quaternary structure, homodimer.

It localises to the cytoplasm. The enzyme catalyses (R)-pantoate + beta-alanine + ATP = (R)-pantothenate + AMP + diphosphate + H(+). It functions in the pathway cofactor biosynthesis; (R)-pantothenate biosynthesis; (R)-pantothenate from (R)-pantoate and beta-alanine: step 1/1. In terms of biological role, catalyzes the condensation of pantoate with beta-alanine in an ATP-dependent reaction via a pantoyl-adenylate intermediate. The chain is Pantothenate synthetase from Nitratiruptor sp. (strain SB155-2).